The following is a 268-amino-acid chain: Tryptophan synthase alpha chain (268 aa).

Active-site proton acceptor residues include E49 and D60.

It belongs to the TrpA family. As to quaternary structure, tetramer of two alpha and two beta chains.

It carries out the reaction (1S,2R)-1-C-(indol-3-yl)glycerol 3-phosphate + L-serine = D-glyceraldehyde 3-phosphate + L-tryptophan + H2O. The protein operates within amino-acid biosynthesis; L-tryptophan biosynthesis; L-tryptophan from chorismate: step 5/5. In terms of biological role, the alpha subunit is responsible for the aldol cleavage of indoleglycerol phosphate to indole and glyceraldehyde 3-phosphate. This is Tryptophan synthase alpha chain from Pseudomonas aeruginosa (strain ATCC 15692 / DSM 22644 / CIP 104116 / JCM 14847 / LMG 12228 / 1C / PRS 101 / PAO1).